Consider the following 185-residue polypeptide: Ribosome-recycling factor (185 aa).

The protein belongs to the RRF family.

It localises to the cytoplasm. Functionally, responsible for the release of ribosomes from messenger RNA at the termination of protein biosynthesis. May increase the efficiency of translation by recycling ribosomes from one round of translation to another. The chain is Ribosome-recycling factor from Yersinia pseudotuberculosis serotype O:1b (strain IP 31758).